A 363-amino-acid chain; its full sequence is MTARSRPGYFRQEINKTIWEVPDRYKDLKQVGTGAYGTVCYALDRRTGAKVAIKKLHRPFQSDLFAKRAYRELRLLKHMKHDNVIGLVDVFTADLSLDRFHDFYLVMPFMGTDLGKLMKMERLSEERVQYLVYQMLKGLKYIHAAGIIHRDLKPGNLAINEECELKILDFGLARQTDSEMTGYVVTRWYRAPEVILSWMHYTQTVDIWSVGCIMAEMLLGKPLFKGHDHLDQLMEIMKVTGTPSKEFTAKLQSEDARNYVTKLPRFRKKDLRILLPNVNPQAIKVLDGMLLLDPESRITAAEALAFPFFSEFREPEEETEAPPYDHSLDEADQSLEQWKRLTFTEILTFQPAPAVAESKETAL.

Positions 25–309 constitute a Protein kinase domain; it reads YKDLKQVGTG…AAEALAFPFF (285 aa). ATP-binding positions include 31–39 and Lys-54; that span reads VGTGAYGTV. Asp-151 serves as the catalytic Proton acceptor. Thr-181 carries the phosphothreonine modification. The TXY motif lies at 181–183; that stretch reads TGY. Position 183 is a phosphotyrosine (Tyr-183).

The protein belongs to the protein kinase superfamily. CMGC Ser/Thr protein kinase family. MAP kinase subfamily. Mg(2+) serves as cofactor. Post-translationally, dually phosphorylated on Thr-181 and Tyr-183, which activates the enzyme.

The protein resides in the cytoplasm. It carries out the reaction L-seryl-[protein] + ATP = O-phospho-L-seryl-[protein] + ADP + H(+). The catalysed reaction is L-threonyl-[protein] + ATP = O-phospho-L-threonyl-[protein] + ADP + H(+). Activated by threonine and tyrosine phosphorylation. Its function is as follows. Serine/threonine kinase which acts as an essential component of the MAP kinase signal transduction pathway. MAPK12 is one of the four p38 MAPKs which play an important role in the cascades of cellular responses evoked by extracellular stimuli such as pro-inflammatory cytokines or physical stress leading to direct activation of transcription factors. Accordingly, p38 MAPKs phosphorylate a broad range of proteins and it has been estimated that they may have approximately 200 to 300 substrates each. Some of the targets are downstream kinases such as MAPKAPK2, which are activated through phosphorylation and further phosphorylate additional targets. This Danio rerio (Zebrafish) protein is Mitogen-activated protein kinase 12 (mapk12).